Here is a 233-residue protein sequence, read N- to C-terminus: uncharacterized protein (233 aa).

The protein belongs to the asfivirus H233R family.

This is an uncharacterized protein from African swine fever virus (isolate Tick/Malawi/Lil 20-1/1983) (ASFV).